A 309-amino-acid chain; its full sequence is Small ribosomal subunit protein mS23 (309 aa).

The protein belongs to the mitochondrion-specific ribosomal protein mS23 family. As to quaternary structure, component of the mitochondrial small ribosomal subunit.

It localises to the mitochondrion. In Lodderomyces elongisporus (strain ATCC 11503 / CBS 2605 / JCM 1781 / NBRC 1676 / NRRL YB-4239) (Yeast), this protein is Small ribosomal subunit protein mS23 (RSM25).